The following is a 231-amino-acid chain: ATP-dependent dethiobiotin synthetase BioD (231 aa).

12 to 17 (EVGKTV) lines the ATP pocket. Threonine 16 serves as a coordination point for Mg(2+). Residue lysine 37 is part of the active site. A substrate-binding site is contributed by serine 41. Residues aspartate 51, 112-115 (EGAG), and 202-204 (PKL) each bind ATP. Mg(2+) contacts are provided by aspartate 51 and glutamate 112.

This sequence belongs to the dethiobiotin synthetase family. Homodimer. Mg(2+) serves as cofactor.

It is found in the cytoplasm. It catalyses the reaction (7R,8S)-7,8-diammoniononanoate + CO2 + ATP = (4R,5S)-dethiobiotin + ADP + phosphate + 3 H(+). Its pathway is cofactor biosynthesis; biotin biosynthesis; biotin from 7,8-diaminononanoate: step 1/2. In terms of biological role, catalyzes a mechanistically unusual reaction, the ATP-dependent insertion of CO2 between the N7 and N8 nitrogen atoms of 7,8-diaminopelargonic acid (DAPA, also called 7,8-diammoniononanoate) to form a ureido ring. The protein is ATP-dependent dethiobiotin synthetase BioD of Bacillus subtilis (strain 168).